Reading from the N-terminus, the 495-residue chain is Probable polyamine transporter At1g31830 (495 aa).

The next 11 membrane-spanning stretches (helical) occupy residues 49–69 (VSML…PFGV), 79–99 (LLAL…EALI), 112–132 (GYVV…QGWM), 156–176 (VPAL…TILL), 186–206 (IVGW…AVMG), 230–250 (LYLN…TLAG), 267–287 (VILV…AIPL), 357–377 (TPLL…WLSF), 380–400 (IVAA…IAFV), 417–437 (IGTT…CAVV), and 442–462 (LKVA…HPLL).

It belongs to the amino acid-polyamine-organocation (APC) superfamily. Polyamine:cation symporter (PHS) (TC 2.A.3.12) family.

The protein resides in the cell membrane. Probable cell membrane polyamine/proton symporter involved in the polyamine uptake in cells. The chain is Probable polyamine transporter At1g31830 from Arabidopsis thaliana (Mouse-ear cress).